The primary structure comprises 401 residues: S-adenosylmethionine synthase (401 aa).

135–140 (GHGSGD) provides a ligand contact to ATP.

It belongs to the AdoMet synthase 2 family. The cofactor is Mg(2+).

The enzyme catalyses L-methionine + ATP + H2O = S-adenosyl-L-methionine + phosphate + diphosphate. It functions in the pathway amino-acid biosynthesis; S-adenosyl-L-methionine biosynthesis; S-adenosyl-L-methionine from L-methionine: step 1/1. In terms of biological role, catalyzes the formation of S-adenosylmethionine from methionine and ATP. This is S-adenosylmethionine synthase from Methanobrevibacter smithii (strain ATCC 35061 / DSM 861 / OCM 144 / PS).